Consider the following 291-residue polypeptide: Ribonuclease Z (291 aa).

7 residues coordinate Zn(2+): H61, H63, D65, H66, H133, D201, and H257. D65 (proton acceptor) is an active-site residue.

The protein belongs to the RNase Z family. As to quaternary structure, homodimer. Zn(2+) is required as a cofactor.

It carries out the reaction Endonucleolytic cleavage of RNA, removing extra 3' nucleotides from tRNA precursor, generating 3' termini of tRNAs. A 3'-hydroxy group is left at the tRNA terminus and a 5'-phosphoryl group is left at the trailer molecule.. Functionally, zinc phosphodiesterase, which displays some tRNA 3'-processing endonuclease activity. Probably involved in tRNA maturation, by removing a 3'-trailer from precursor tRNA. The sequence is that of Ribonuclease Z from Saccharolobus islandicus (strain M.16.27) (Sulfolobus islandicus).